Reading from the N-terminus, the 419-residue chain is Endochitinase 2 (419 aa).

The signal sequence occupies residues 1–18; the sequence is MHHLRALVGVGLAGLAAG. One can recognise a GH18 domain in the interval 35–343; it reads AQNVVYWGQN…QQAKSILVNG (309 aa). A glycan (N-linked (GlcNAc...) asparagine) is linked at N153. E173 functions as the Proton donor in the catalytic mechanism. N237 and N256 each carry an N-linked (GlcNAc...) asparagine glycan. Residues 343 to 390 form a disordered region; it reads GAPCPSSGPPSSTPATAPAPTATTMPSSTSVSSPTASPTGGTVPQWGQ. The span at 355-384 shows a compositional bias: low complexity; the sequence is TPATAPAPTATTMPSSTSVSSPTASPTGGT. Residues 383–419 form the CBM1 domain; it reads GTVPQWGQCGGEGYSGPTQCVPPYQCVKQGDWWSSCR.

The protein belongs to the glycosyl hydrolase 18 family. Chitinase class III subfamily.

Its subcellular location is the secreted. The enzyme catalyses Random endo-hydrolysis of N-acetyl-beta-D-glucosaminide (1-&gt;4)-beta-linkages in chitin and chitodextrins.. Its function is as follows. Secreted chitinase involved in the degradation of chitin, a component of the cell walls of fungi and exoskeletal elements of some animals (including worms and arthropods). Participates in the infection process and directly acts in the penetration process of the host cuticle. The chain is Endochitinase 2 (chi2) from Metarhizium anisopliae (Entomophthora anisopliae).